The sequence spans 526 residues: Seipin-2 (526 aa).

The segment at 33-77 is disordered; that stretch reads PIRSNSHQPSSLLRRRKSAHRRDLISSDIETEPSSSSDGFDVGEK. The segment covering 58–70 has biased composition (low complexity); it reads SSDIETEPSSSSD. The next 4 helical transmembrane spans lie at 195-215, 224-243, 258-278, and 483-503; these read SLLTFPPWLLRNCFLFFFDPF, FLMARVAGISDMIFGYMNPF, FGWGMFWAVYVGIVLFGLLVS, and LFVWISMSLFITELLFTLVCC.

The protein belongs to the seipin family. Expressed in seeds, seedlings, leaves, stems and roots. Not detected in flowers.

The protein localises to the endoplasmic reticulum membrane. Its function is as follows. Involved in lipid metabolism and lipid droplet (LD) morphology, number, and size. Supports the formation of small-sized LDs and modulates triacylglycerol accumulation. Induces probably a reorganization of the endoplasmic reticulum into LD-forming domains. The chain is Seipin-2 from Arabidopsis thaliana (Mouse-ear cress).